Reading from the N-terminus, the 211-residue chain is Superoxide dismutase [Fe] (211 aa).

4 residues coordinate Fe cation: H31, H79, D165, and H169.

It belongs to the iron/manganese superoxide dismutase family. In terms of assembly, homotetramer. The cofactor is Fe cation.

It catalyses the reaction 2 superoxide + 2 H(+) = H2O2 + O2. Functionally, destroys superoxide anion radicals which are normally produced within the cells and which are toxic to biological systems. The protein is Superoxide dismutase [Fe] (sod) of Pyrobaculum aerophilum (strain ATCC 51768 / DSM 7523 / JCM 9630 / CIP 104966 / NBRC 100827 / IM2).